A 388-amino-acid chain; its full sequence is Flavin-dependent monooxygenase (388 aa).

R54 provides a ligand contact to NADPH. FAD-binding residues include D61, R117, and D311.

Belongs to the aromatic-ring hydroxylase family. TetX subfamily. As to quaternary structure, monomer. FAD is required as a cofactor.

It is found in the cytoplasm. It carries out the reaction a tetracycline + NADPH + O2 + H(+) = an 11a-hydroxytetracycline + NADP(+) + H2O. The enzyme catalyses tetracycline + NADPH + O2 + H(+) = 11a-hydroxytetracycline + NADP(+) + H2O. The catalysed reaction is oxytetracycline + NADPH + O2 + H(+) = 11a-hydroxy-oxytetracycline + NADP(+) + H2O. Its function is as follows. An FAD-requiring monooxygenase active on some tetracycline antibiotic derivatives, which leads to their inactivation. Hydroxylates carbon 11a of tetracycline and some analogs. In terms of biological role, confers resistance to tetracycline via an oxidoreductase activity; NADPH is more active than NAD. Expression in E.coli leads to breakdown of tetracycline. Confers resistance to doxycycline, chlortetracycline, oxytetracycline and minocycline. In Bacteroides fragilis, this protein is Flavin-dependent monooxygenase.